The following is a 539-amino-acid chain: MNSPRSNAVNGGSGGAISALPSTLAQLALRDKQQAASASASSATNGSSGSESLVGVGGRPPNQPPSVPVAASGKLDTSGGGASNGDSNKLTHDLQEKEHQQAQKPQKPPLPVRQKPMEIAGYVGFANLPNQVYRKAVKRGFEFTLMVVGASGLGKSTLINSMFLSDIYNAEQYPGPSLRKKKTVAVEATKVMLKENGVNLTLTVVDTPGFGDAVDNSNCWVPILEYVDSKYEEYLTAESRVYRKTISDSRVHCCLYFIAPSGHGLLPLDIACMQSLSDKVNLVPVIAKADTMTPDEVHLFKKQILNEIAQHKIKIYDFPATLEDAAEEAKTTQNLRSRVPFAVVGANTIIEQDGKKVRGRRYPWGLVEVENLTHCDFIALRNMVIRTHLQDLKDVTNNVHYENYRCRKLSELGLVDGKARLSNKNPLTQMEEEKREHEQKMKKMEAEMEQVFDMKVKEKMQKLRDSELELARRHEERKKALELQIRELEEKRREFEREKKEWEDVNHVTLEELKRRSLGANSSTDNVDGKKEKKKKGLF.

Phosphoserine is present on residues Ser-6 and Ser-13. Residues Leu-29 to Leu-90 are disordered. The segment covering Ala-35 to Val-54 has biased composition (low complexity). The Septin-type G domain occupies Arg-139–Glu-411. Residues Gly-149–Ser-156 form a G1 motif region. GTP-binding positions include Gly-149–Ser-156, Thr-183, Gly-209, Lys-288–Glu-296, Gly-345, and Arg-360. The G3 motif stretch occupies residues Asp-206–Gly-209. Residues Ala-287–Asp-290 form a G4 motif region. The stretch at Arg-420–Arg-516 forms a coiled coil. Residues Leu-513–Phe-539 are disordered. Phosphoserine is present on Ser-517.

The protein belongs to the TRAFAC class TrmE-Era-EngA-EngB-Septin-like GTPase superfamily. Septin GTPase family. As to quaternary structure, likely part of a multicomponent septin complex that includes Septin1. Interacts with Septin1. Interacts with hil. Interacts with park. In terms of processing, ubiquitinated by park, leading to its degradation by the proteasome. In terms of tissue distribution, accumulates at the leading edge of the cleavage furrow in dividing cells and cellularizing embryos (at protein level).

It localises to the apical cell membrane. It is found in the cleavage furrow. Its subcellular location is the cytoplasm. The protein localises to the cell cortex. Its function is as follows. Involved in cytokinesis and possibly cellularization. Also acts as an enhancer of the sina gene, thus having a role in photoreceptor development. May be involved in p53-dependent apoptosis. This is Protein peanut (pnut) from Drosophila melanogaster (Fruit fly).